The chain runs to 137 residues: Golgin subfamily A member 7 (137 aa).

S-palmitoyl cysteine attachment occurs at residues C69 and C72.

It belongs to the ERF4 family. Interacts with GOLGA3. Interacts with ZDHHC9. Post-translationally, palmitoylated on Cys-69 and Cys-72; which is required for Golgi localization and interaction with GOLGA3.

Its subcellular location is the golgi apparatus membrane. In terms of biological role, may be involved in protein transport from Golgi to cell surface. The ZDHHC9-GOLGA7 complex is a palmitoyltransferase specific for HRAS and NRAS. This is Golgin subfamily A member 7 (Golga7) from Rattus norvegicus (Rat).